The following is a 260-amino-acid chain: 5'-nucleotidase SurE (260 aa).

A divalent metal cation-binding residues include D10, D11, S41, and N95.

This sequence belongs to the SurE nucleotidase family. It depends on a divalent metal cation as a cofactor.

The protein resides in the cytoplasm. The enzyme catalyses a ribonucleoside 5'-phosphate + H2O = a ribonucleoside + phosphate. In terms of biological role, nucleotidase that shows phosphatase activity on nucleoside 5'-monophosphates. The polypeptide is 5'-nucleotidase SurE (Methanoregula boonei (strain DSM 21154 / JCM 14090 / 6A8)).